A 796-amino-acid chain; its full sequence is Probable phosphoketolase (796 aa).

Belongs to the XFP family. Requires thiamine diphosphate as cofactor.

This chain is Probable phosphoketolase, found in Streptomyces coelicolor (strain ATCC BAA-471 / A3(2) / M145).